We begin with the raw amino-acid sequence, 265 residues long: Orotidine 5'-phosphate decarboxylase (265 aa).

Substrate is bound by residues D37, 59–61 (KTH), 91–100 (DRKFADIGNT), Y217, and R236. The active-site Proton donor is the K93.

The protein belongs to the OMP decarboxylase family.

The enzyme catalyses orotidine 5'-phosphate + H(+) = UMP + CO2. The protein operates within pyrimidine metabolism; UMP biosynthesis via de novo pathway; UMP from orotate: step 2/2. The protein is Orotidine 5'-phosphate decarboxylase (URA3) of Saccharomycopsis fibuligera (Yeast).